The chain runs to 248 residues: Triosephosphate isomerase (248 aa).

N9–K11 contacts substrate. The active-site Electrophile is H92. The Proton acceptor role is filled by E164. Residues G170, S210, and G231–G232 each bind substrate.

The protein belongs to the triosephosphate isomerase family. In terms of assembly, homodimer.

The protein resides in the cytoplasm. The enzyme catalyses D-glyceraldehyde 3-phosphate = dihydroxyacetone phosphate. It functions in the pathway carbohydrate biosynthesis; gluconeogenesis. It participates in carbohydrate degradation; glycolysis; D-glyceraldehyde 3-phosphate from glycerone phosphate: step 1/1. Its function is as follows. Involved in the gluconeogenesis. Catalyzes stereospecifically the conversion of dihydroxyacetone phosphate (DHAP) to D-glyceraldehyde-3-phosphate (G3P). This is Triosephosphate isomerase from Mycoplasma capricolum subsp. capricolum (strain California kid / ATCC 27343 / NCTC 10154).